The primary structure comprises 357 residues: DNA replication and repair protein RecF (357 aa).

30–37 (GANGSGKT) contacts ATP.

It belongs to the RecF family.

The protein localises to the cytoplasm. Functionally, the RecF protein is involved in DNA metabolism; it is required for DNA replication and normal SOS inducibility. RecF binds preferentially to single-stranded, linear DNA. It also seems to bind ATP. The sequence is that of DNA replication and repair protein RecF from Escherichia coli O6:K15:H31 (strain 536 / UPEC).